Reading from the N-terminus, the 302-residue chain is Ubiquitin thioesterase OTU1 (302 aa).

A UBX-like region spans residues Arg5–Ser83. Residues Leu103 to Lys228 form the OTU domain. The segment at Val108–Cys114 is cys-loop. Residue Asp111 is part of the active site. Cys114 serves as the catalytic Nucleophile. The variable-loop stretch occupies residues Ile167–Ile177. The his-loop stretch occupies residues Tyr217–His221. Ile220 serves as a coordination point for substrate. The active site involves His221. Residues Asp245–Gln250 are S2 site. The C2H2-type zinc-finger motif lies at Leu272–His296. His296 is an active-site residue.

It is found in the cytoplasm. It catalyses the reaction Thiol-dependent hydrolysis of ester, thioester, amide, peptide and isopeptide bonds formed by the C-terminal Gly of ubiquitin (a 76-residue protein attached to proteins as an intracellular targeting signal).. Functionally, hydrolase that can remove conjugated ubiquitin from proteins and participates in endoplasmic reticulum-associated degradation (ERAD) for misfolded lumenal proteins. May act by triming the ubiquitin chain on the associated substrate to facilitate their threading through the VCP/p97 pore. Ubiquitin moieties on substrates may present a steric impediment to the threading process when the substrate is transferred to the VCP pore and threaded through VCP's axial channel. Mediates deubiquitination of 'Lys-27'-, 'Lys-29'- and 'Lys-33'-linked polyubiquitin chains. Also able to hydrolyze 'Lys-11'-linked ubiquitin chains. Cleaves both polyubiquitin and di-ubiquitin. The protein is Ubiquitin thioesterase OTU1 (YOD1) of Gallus gallus (Chicken).